The primary structure comprises 344 residues: L-rhamnose-proton symporter (344 aa).

A run of 10 helical transmembrane segments spans residues 4-24 (AITM…CFYA), 38-58 (WSIG…ALLL), 68-88 (FNLS…IGNI), 101-121 (MGIG…TPII), 137-157 (TLLG…AGQL), 175-195 (LLLA…MNAA), 214-234 (LPSY…FCFV), 259-279 (ILLS…YAWG), 290-310 (ISWM…GLVL), and 323-343 (VLSL…MGMA).

The protein belongs to the L-rhamnose transporter (TC 2.A.7.6) family.

Its subcellular location is the cell inner membrane. The catalysed reaction is L-rhamnopyranose(in) + H(+)(in) = L-rhamnopyranose(out) + H(+)(out). Uptake of L-rhamnose across the cytoplasmic membrane with the concomitant transport of protons into the cell (symport system). In Citrobacter koseri (strain ATCC BAA-895 / CDC 4225-83 / SGSC4696), this protein is L-rhamnose-proton symporter.